The primary structure comprises 269 residues: UPF0494 membrane protein C1348.01 (269 aa).

A run of 4 helical transmembrane segments spans residues 107 to 127 (WPLL…KFEV), 144 to 164 (IWVP…SLIF), 177 to 197 (GVII…IAAL), and 201 to 221 (ITGL…LSLG).

Belongs to the UPF0494 family.

It is found in the vacuole membrane. This is UPF0494 membrane protein C1348.01 from Schizosaccharomyces pombe (strain 972 / ATCC 24843) (Fission yeast).